A 692-amino-acid polypeptide reads, in one-letter code: ABC transporter F family member 5 (692 aa).

The segment at 64 to 95 is disordered; that stretch reads EIESLFSKQPSQQDSDRKRNGKSSKNGASGIS. A compositionally biased stretch (polar residues) spans 86 to 95; sequence SSKNGASGIS. ABC transporter domains lie at 98–356 and 425–640; these read VKLE…ETQN and VNVK…TKEL. Residues 130-137 and 457-464 contribute to the ATP site; these read GVNGAGKT and GPNGCGKS. The disordered stretch occupies residues 644–692; sequence AELEEKAPKVKAKSKMSKAEKEARKKQKMQAFQQAKQKSKASKNSKRWN. Residues 680–692 are compositionally biased toward basic residues; the sequence is QKSKASKNSKRWN.

It belongs to the ABC transporter superfamily. ABCF family. EF3 (TC 3.A.1.121) subfamily.

The protein is ABC transporter F family member 5 (ABCF5) of Arabidopsis thaliana (Mouse-ear cress).